The sequence spans 576 residues: Trehalase 2 (576 aa).

It belongs to the glycosyl hydrolase 15 family.

The catalysed reaction is alpha,alpha-trehalose + H2O = alpha-D-glucose + beta-D-glucose. It functions in the pathway glycan degradation; trehalose degradation; D-glucose from alpha,alpha-trehalose: step 1/1. Catalyzes the hydrolysis of alpha,alpha-trehalose into two molecules of D-glucose. This is Trehalase 2 (treH2) from Sulfolobus acidocaldarius (strain ATCC 33909 / DSM 639 / JCM 8929 / NBRC 15157 / NCIMB 11770).